The primary structure comprises 1064 residues: Importin-13 homolog A (1064 aa).

The Importin N-terminal domain maps to 40 to 109 (ALPQIQQWLI…LDNLLLFLKT (70 aa)). Disordered regions lie at residues 695–722 (TTQQ…NNNN) and 839–860 (NNKK…NENN). Residues 700-722 (NNNNNNNNNNNNNNNNNNNNNNN) are compositionally biased toward low complexity.

Belongs to the importin beta family. In terms of assembly, forms a complex with an importin alpha subunit.

Its subcellular location is the cytoplasm. The protein resides in the nucleus envelope. In terms of biological role, required for nuclear protein import and mediates docking of import substrate to distinct nucleoporins. In Dictyostelium discoideum (Social amoeba), this protein is Importin-13 homolog A (ipo13A).